Here is a 403-residue protein sequence, read N- to C-terminus: MSVADQMALIKRGAVEILVEKELEEKLEKSAKTGVPLKIKAGFDPTAPDLHLGHTVLLHKMRQFQQLGHEVIFLIGDFTGMIGDPTGKSETRKALSREDVLRNAETYKEQVFKILDPEKTRVAFNSEWLAKLDAGGMIGLAAKYTVARMLERDDFGKRFANQLPISIHEFLYPLIQGYDSVALQADVELGGTDQKFNLLVGRELQREWGQTPQTVITMPLLEGLDGVNKMSKSLGNYIGINEPADEIFGKIMSISDELMLRYYELLSDLSMAEIDGMRTGIRDGSVHPMEAKKQLGREVVARYHGAAAATDAEEHFVKRFRDNQTPDEMPELTLAATDEKVALCRLLAEAGLVKSNSEGRRAIQQGGVKVNGEKVSDESLELAATGVYVIQFGKRRFARITFA.

Residues 45–54 carry the 'HIGH' region motif; that stretch reads PTAPDLHLGH. Residues 229–233 carry the 'KMSKS' region motif; sequence KMSKS. Position 232 (lysine 232) interacts with ATP. The S4 RNA-binding domain occupies 341-402; that stretch reads VALCRLLAEA…GKRRFARITF (62 aa).

This sequence belongs to the class-I aminoacyl-tRNA synthetase family. TyrS type 2 subfamily. Homodimer.

Its subcellular location is the cytoplasm. It carries out the reaction tRNA(Tyr) + L-tyrosine + ATP = L-tyrosyl-tRNA(Tyr) + AMP + diphosphate + H(+). Functionally, catalyzes the attachment of tyrosine to tRNA(Tyr) in a two-step reaction: tyrosine is first activated by ATP to form Tyr-AMP and then transferred to the acceptor end of tRNA(Tyr). This is Tyrosine--tRNA ligase from Geobacter sulfurreducens (strain ATCC 51573 / DSM 12127 / PCA).